The following is a 176-amino-acid chain: Large ribosomal subunit protein uL10 (176 aa).

Belongs to the universal ribosomal protein uL10 family. In terms of assembly, part of the ribosomal stalk of the 50S ribosomal subunit. The N-terminus interacts with L11 and the large rRNA to form the base of the stalk. The C-terminus forms an elongated spine to which L12 dimers bind in a sequential fashion forming a multimeric L10(L12)X complex.

Functionally, forms part of the ribosomal stalk, playing a central role in the interaction of the ribosome with GTP-bound translation factors. The chain is Large ribosomal subunit protein uL10 from Mycobacteroides abscessus (strain ATCC 19977 / DSM 44196 / CCUG 20993 / CIP 104536 / JCM 13569 / NCTC 13031 / TMC 1543 / L948) (Mycobacterium abscessus).